The sequence spans 192 residues: Transcriptional activator GvpE (192 aa).

140–145 (KRKVYR) serves as a coordination point for DNA. Residues 150-181 (EATFDTVEPAVNRLVTFSLVLKALMIDCNARY) are leucine-zipper.

In terms of assembly, interacts with GvpD, also with c-GvpD from H.salinarum.

The protein localises to the cytoplasm. With respect to regulation, the amount of protein that accumulates is controlled by GvpD; GvpD causes a reduction in the amount of GvpE, preventing accumulation of excessive amounts of gas vesicles. Its function is as follows. Plays a regulatory role in gas vesicle synthesis, activates transcription of the gvpA operon, and probably of the gvpD operon. Gas vesicles are hollow, gas filled proteinaceous nanostructures found in some microorganisms. They allow positioning of halobacteria at the optimal depth for growth in the poorly aerated, shallow brine pools of their habitat. In terms of biological role, expression of a 9.5 kb mc-vac DNA fragment containing 2 divergently transcribed regions (gvpD-gvpE-gvpF-gvpG-gvpH-gvpI-gvpJ-gvpK-gvpL-gvpM and gvpA-gvpC-gvpN-gvpO) allows H.volcanii to produce gas vesicles. The polypeptide is Transcriptional activator GvpE (Haloferax mediterranei (strain ATCC 33500 / DSM 1411 / JCM 8866 / NBRC 14739 / NCIMB 2177 / R-4) (Halobacterium mediterranei)).